Reading from the N-terminus, the 1407-residue chain is DNA-directed RNA polymerase subunit beta' (1407 aa).

Cysteine 70, cysteine 72, cysteine 85, and cysteine 88 together coordinate Zn(2+). Mg(2+)-binding residues include aspartate 460, aspartate 462, and aspartate 464. Zn(2+) is bound by residues cysteine 814, cysteine 888, cysteine 895, and cysteine 898.

The protein belongs to the RNA polymerase beta' chain family. In terms of assembly, the RNAP catalytic core consists of 2 alpha, 1 beta, 1 beta' and 1 omega subunit. When a sigma factor is associated with the core the holoenzyme is formed, which can initiate transcription. It depends on Mg(2+) as a cofactor. Requires Zn(2+) as cofactor.

The enzyme catalyses RNA(n) + a ribonucleoside 5'-triphosphate = RNA(n+1) + diphosphate. Its function is as follows. DNA-dependent RNA polymerase catalyzes the transcription of DNA into RNA using the four ribonucleoside triphosphates as substrates. The polypeptide is DNA-directed RNA polymerase subunit beta' (Buchnera aphidicola subsp. Acyrthosiphon pisum (strain APS) (Acyrthosiphon pisum symbiotic bacterium)).